We begin with the raw amino-acid sequence, 569 residues long: MLO-like protein 10 (569 aa).

At methionine 1–threonine 41 the chain is on the extracellular side. A helical transmembrane segment spans residues tryptophan 42–leucine 62. At histidine 63–lysine 85 the chain is on the cytoplasmic side. A helical transmembrane segment spans residues alanine 86 to leucine 106. Over lysine 107–histidine 163 the chain is Extracellular. The helical transmembrane segment at isoleucine 164–glycine 184 threads the bilayer. Topologically, residues arginine 185–lysine 286 are cytoplasmic. A helical membrane pass occupies residues valine 287–valine 307. Asparagine 308 is a topological domain (extracellular). Residues glycine 309–threonine 329 form a helical membrane-spanning segment. Residues lysine 330 to histidine 372 lie on the Cytoplasmic side of the membrane. The helical transmembrane segment at leucine 373–tyrosine 393 threads the bilayer. The Extracellular portion of the chain corresponds to serine 394–serine 413. The chain crosses the membrane as a helical span at residues leucine 414–threonine 434. The Cytoplasmic segment spans residues glutamine 435 to aspartate 569. Positions glutamate 447–arginine 468 are calmodulin-binding.

The protein belongs to the MLO family.

The protein resides in the membrane. May be involved in modulation of pathogen defense and leaf cell death. Activity seems to be regulated by Ca(2+)-dependent calmodulin binding and seems not to require heterotrimeric G proteins. In Arabidopsis thaliana (Mouse-ear cress), this protein is MLO-like protein 10 (MLO10).